Consider the following 178-residue polypeptide: Large ribosomal subunit protein uL5 (178 aa).

The protein belongs to the universal ribosomal protein uL5 family. As to quaternary structure, part of the 50S ribosomal subunit; part of the 5S rRNA/L5/L18/L25 subcomplex. Contacts the 5S rRNA and the P site tRNA. Forms a bridge to the 30S subunit in the 70S ribosome.

Functionally, this is one of the proteins that bind and probably mediate the attachment of the 5S RNA into the large ribosomal subunit, where it forms part of the central protuberance. In the 70S ribosome it contacts protein S13 of the 30S subunit (bridge B1b), connecting the 2 subunits; this bridge is implicated in subunit movement. Contacts the P site tRNA; the 5S rRNA and some of its associated proteins might help stabilize positioning of ribosome-bound tRNAs. In Prochlorococcus marinus (strain MIT 9515), this protein is Large ribosomal subunit protein uL5.